Here is a 247-residue protein sequence, read N- to C-terminus: Probable transcriptional regulatory protein PC1_1817 (247 aa).

This sequence belongs to the TACO1 family.

The protein localises to the cytoplasm. The protein is Probable transcriptional regulatory protein PC1_1817 of Pectobacterium carotovorum subsp. carotovorum (strain PC1).